A 150-amino-acid polypeptide reads, in one-letter code: Arginine repressor (150 aa).

Belongs to the ArgR family.

It localises to the cytoplasm. Its pathway is amino-acid biosynthesis; L-arginine biosynthesis [regulation]. Its function is as follows. Regulates arginine biosynthesis genes. The chain is Arginine repressor from Desulfitobacterium hafniense (strain DSM 10664 / DCB-2).